The primary structure comprises 108 residues: MSQWQNICKIDDILPGTGVCALSGGEQVAIFRPYHSDQVFAISNIDPFFEASVLSRGLIAEHQGELWVASPLKKQRFRLSDGLCMEDEQFSVKHYDARVKDGVVQLRG.

In terms of assembly, associates with NirB.

The protein localises to the cytoplasm. The enzyme catalyses NH4(+) + 3 NAD(+) + 2 H2O = nitrite + 3 NADH + 5 H(+). In terms of biological role, required for activity of the reductase. This Salmonella typhi protein is Nitrite reductase (NADH) small subunit (nirD).